Consider the following 437-residue polypeptide: Ribosomal protein uS12 methylthiotransferase RimO (437 aa).

Residues 4-114 (PRVSFVSLGC…VMNAVHEVAP (111 aa)) form the MTTase N-terminal domain. 6 residues coordinate [4Fe-4S] cluster: cysteine 13, cysteine 49, cysteine 78, cysteine 145, cysteine 149, and cysteine 152. The region spanning 131 to 369 (LTPRHYAYLK…MAKQQQISTN (239 aa)) is the Radical SAM core domain. The TRAM domain maps to 372–437 (KKKVGKRLPV…DAYDLHGTAV (66 aa)).

It belongs to the methylthiotransferase family. RimO subfamily. [4Fe-4S] cluster serves as cofactor.

Its subcellular location is the cytoplasm. It catalyses the reaction L-aspartate(89)-[ribosomal protein uS12]-hydrogen + (sulfur carrier)-SH + AH2 + 2 S-adenosyl-L-methionine = 3-methylsulfanyl-L-aspartate(89)-[ribosomal protein uS12]-hydrogen + (sulfur carrier)-H + 5'-deoxyadenosine + L-methionine + A + S-adenosyl-L-homocysteine + 2 H(+). In terms of biological role, catalyzes the methylthiolation of an aspartic acid residue of ribosomal protein uS12. In Brucella abortus (strain S19), this protein is Ribosomal protein uS12 methylthiotransferase RimO.